We begin with the raw amino-acid sequence, 359 residues long: MLVSSNEEQLTAHTPTSSSSIEPKILAACSYSLSVGPCSLAVSPKGVNSKSPSLKNETAFVVDSVSTLSAESSALLYNTQSSLLTGLSMNGYLGEYQEDIIHHLITREKNFLLNVHLSNQQPELRWSMRPALVNFIVEIHNGFDLSIDTLPLSISLMDSYVSRRVVYCKHIQLVACVCLWIASKFHETEDRVPLLQELKLACKNIYAEDLFIRMERHILDTLDWDISIPTPASYIPVLDPIFFLVLDASMFVPNLFKFPASKIACSVMNIVNEHVGSFLLTHPSMESYRKDDNFLWPEDLDTVTSYMENMSKRYANEECTDLLFSSLGRISSILAKKYPEQCAMAAWCNMTEKDTERTL.

It belongs to the cyclin family.

Function in exit from the mitotic cycle. Contributes to negative regulation of the timing of sexual development in fission yeast, and functions at the transition between cycling and non-cycling cells. Interacts with protein kinase A. The polypeptide is Cyclin puc1 (puc1) (Schizosaccharomyces pombe (strain 972 / ATCC 24843) (Fission yeast)).